A 539-amino-acid polypeptide reads, in one-letter code: Sodium/hydrogen exchanger 9B2 (539 aa).

The Cytoplasmic portion of the chain corresponds to 1–94 (MEDSLFSVDK…ACPPQGCFSL (94 aa)). A helical membrane pass occupies residues 95–112 (AITNVTMVILIWAVVWSI). At 113 to 121 (TGPECLPGG) the chain is on the extracellular side. The chain crosses the membrane as a helical span at residues 122–141 (NLFGILALLFSAALGGKLIS). Residues 142 to 152 (LIKIPSLPPLP) lie on the Cytoplasmic side of the membrane. Residues 153–169 (PLLGMLLAGFLIRNIPV) traverse the membrane as a helical segment. The Extracellular portion of the chain corresponds to 170–179 (ITDQVQIHHK). The helical transmembrane segment at 180 to 197 (WSAALRNIALAIILVRAG) threads the bilayer. Residues 198-208 (LGLDPKALRKL) lie on the Cytoplasmic side of the membrane. A helical transmembrane segment spans residues 209–235 (KAVCLRLSFGPCVVESCTAAVVSHFIM). At 236 to 241 (GFPLTW) the chain is on the extracellular side. A helical membrane pass occupies residues 242-250 (GFMLGFVLG). At 251–278 (AVSPAVVVPSMLILQKEGFGVDKGIPTL) the chain is on the cytoplasmic side. Na(+) is bound by residues V252, G283, D286, and D287. Residues 279-298 (LMAAGSFDDVLAITGFNTCL) form a helical membrane-spanning segment. Residues 299-308 (GMAFSSGSTL) lie on the Extracellular side of the membrane. A helical membrane pass occupies residues 309 to 332 (NTIVRGVLEVVVGIAAGLLFGFFL). Residues 333–347 (HYFPSKDQENLKGKR) lie on the Cytoplasmic side of the membrane. Residues 348–365 (SYLILALSVFAVFGSLYF) form a helical membrane-spanning segment. Residues 366–369 (GFPG) are Extracellular-facing. A helical membrane pass occupies residues 370–381 (SGGLCTLVMAFL). Residues 382–398 (AGIGWSTDKTVVEDIIA) lie on the Cytoplasmic side of the membrane. Residues 399–419 (VSWDIFQPLLFGLIGAEISVA) traverse the membrane as a helical segment. At 420–425 (SLKPET) the chain is on the extracellular side. Residues 426-448 (VGLCTATLIIALIIRICISFLMV) traverse the membrane as a helical segment. Topologically, residues 449 to 469 (CFSGFSLKEKIFISLAWMPKA) are cytoplasmic. Residues 470–481 (TVQAAIGSVALD) form a helical membrane-spanning segment. The Extracellular segment spans residues 482–494 (TARTLENKQFEDY). Residues 495–517 (GMDVLTVAFLGILVTAPIGALVI) traverse the membrane as a helical segment. Topologically, residues 518-539 (GLTGPKMLEKSESRTVTEEGSV) are cytoplasmic.

The protein belongs to the monovalent cation:proton antiporter 1 (CPA1) transporter (TC 2.A.36) family. As to quaternary structure, homodimer; dimerization is essential for SLC9B2 activity. Lipids seem to play a role in the stabilization of the dimerization subdomain.

It is found in the cell membrane. Its subcellular location is the mitochondrion membrane. It localises to the endosome membrane. The protein resides in the recycling endosome membrane. The protein localises to the cytoplasmic vesicle. It is found in the secretory vesicle. Its subcellular location is the synaptic vesicle membrane. It localises to the basolateral cell membrane. The protein resides in the apical cell membrane. It catalyses the reaction Li(+)(out) + H(+)(in) = Li(+)(in) + H(+)(out). It carries out the reaction Li(+)(in) + Na(+)(out) = Li(+)(out) + Na(+)(in). The enzyme catalyses Na(+)(in) + H(+)(out) = Na(+)(out) + H(+)(in). Its activity is regulated as follows. Allosterically inhibited by the N-terminal domain. Inhibited by phloretin. In terms of biological role, electroneutral Na(+) Li(+)/H(+) antiporter that extrudes Na(+) or Li(+) in exchange for external protons across the membrane. Uses the proton gradient/membrane potential to extrude sodium. Contributes to the regulation of intracellular pH and sodium homeostasis. Also able to mediate Na(+)/Li(+) antiporter activity in kidney. In Xenopus tropicalis (Western clawed frog), this protein is Sodium/hydrogen exchanger 9B2 (slc9b2).